The chain runs to 177 residues: Large ribosomal subunit protein uL10 (177 aa).

The protein belongs to the universal ribosomal protein uL10 family. Part of the ribosomal stalk of the 50S ribosomal subunit. The N-terminus interacts with L11 and the large rRNA to form the base of the stalk. The C-terminus forms an elongated spine to which L12 dimers bind in a sequential fashion forming a multimeric L10(L12)X complex.

Its function is as follows. Forms part of the ribosomal stalk, playing a central role in the interaction of the ribosome with GTP-bound translation factors. The sequence is that of Large ribosomal subunit protein uL10 from Thermoanaerobacter sp. (strain X514).